The primary structure comprises 257 residues: Small ribosomal subunit protein uS15m (257 aa).

The transit peptide at 1-57 (MLRVAWRTLSLIRTRAVTQVLVPGLPGGGSAKFPFNQWGLQPRSLLLQAARGYVVRK) directs the protein to the mitochondrion. A disordered region spans residues 225 to 257 (RALKAAAAAQKQAKRRNPDSPAKAIPKTLKDSQ).

This sequence belongs to the universal ribosomal protein uS15 family. As to quaternary structure, component of the mitochondrial small ribosomal subunit (mt-SSU). Mature mammalian 55S mitochondrial ribosomes consist of a small (28S) and a large (39S) subunit. The 28S small subunit contains a 12S ribosomal RNA (12S mt-rRNA) and 30 different proteins. The 39S large subunit contains a 16S rRNA (16S mt-rRNA), a copy of mitochondrial valine transfer RNA (mt-tRNA(Val)), which plays an integral structural role, and 52 different proteins. Interacts with METTL17.

The protein localises to the mitochondrion matrix. This Homo sapiens (Human) protein is Small ribosomal subunit protein uS15m (MRPS15).